Consider the following 1165-residue polypeptide: Peroxisomal ATPase PEX6 (1165 aa).

It belongs to the AAA ATPase family. In terms of assembly, interacts with PEX1; forming the PEX1-PEX6 AAA ATPase complex, which is composed of a heterohexamer formed by a trimer of PEX1-PEX6 dimers.

The protein localises to the membrane. The enzyme catalyses ATP + H2O = ADP + phosphate + H(+). Its function is as follows. Component of the PEX1-PEX6 AAA ATPase complex involved in peroxisome biosynthesis. The complex acts as a protein dislocase complex that mediates the ATP-dependent extraction of the PEX5 receptor from peroxisomal membranes, an essential step for PEX5 recycling. Specifically recognizes PEX5 monoubiquitinated at 'Cys-6', and pulls it out of the peroxisome lumen through the PEX2-PEX10-PEX12 retrotranslocation channel. Extraction by the PEX1-PEX6 AAA ATPase complex is accompanied by unfolding of the TPR repeats and release of bound cargo from PEX5. The sequence is that of Peroxisomal ATPase PEX6 from Komagataella pastoris (Yeast).